A 68-amino-acid polypeptide reads, in one-letter code: Ferredoxin Fdx (68 aa).

[3Fe-4S] cluster is bound by residues Cys12, Gln13, Ala16, Cys18, and Cys56.

Requires [3Fe-4S] cluster as cofactor.

Its function is as follows. Ferredoxin that is the redox partner of cytochrome CYP51, a sterol 14alpha-demethylase encoded by an adjacent gene. This is Ferredoxin Fdx from Mycobacterium tuberculosis (strain ATCC 25618 / H37Rv).